Here is a 78-residue protein sequence, read N- to C-terminus: Small integral membrane protein 1 (78 aa).

M1 is subject to N-acetylmethionine. The tract at residues 1 to 22 is disordered; the sequence is MQSQESGVHYSRWDSSSRDEVS. Residues 1–48 are Cytoplasmic-facing; it reads MQSQESGVHYSRWDSSSRDEVSMTAMSSSEEASCYRRISQKLCSGKLG. Phosphoserine is present on residues S6, S17, S22, and S27. The segment covering 11-21 has biased composition (basic and acidic residues); that stretch reads SRWDSSSRDEV. A helical; Signal-anchor for type II membrane protein transmembrane segment spans residues 49–69; sequence IAMKVLGGVALFWIIFILGYI. Over 70–78 the chain is Extracellular; it reads TGYYVHKCK.

Belongs to the SMIM1 family. Homooligomer; disulfide-linked.

The protein resides in the cell membrane. Its function is as follows. Regulator of red blood cell formation. This is Small integral membrane protein 1 from Mus musculus (Mouse).